The chain runs to 170 residues: Group 2 truncated hemoglobin 3-1 (170 aa).

His-98 is a heme b binding site.

This sequence belongs to the truncated hemoglobin family. Group II subfamily. As to quaternary structure, homodimer when ferric.

In terms of biological role, hemoglobin-like protein that exhibits an unusual concentration-independent binding of O(2) and CO. Required for general plant development and during nodulation. May promote shoot organogenesis from root explants. This is Group 2 truncated hemoglobin 3-1 from Medicago truncatula (Barrel medic).